Reading from the N-terminus, the 134-residue chain is Small ribosomal subunit protein bS6 (134 aa).

The span at 113–122 shows a compositional bias: basic and acidic residues; sequence NKDIKEKEQP. Residues 113–134 are disordered; the sequence is NKDIKEKEQPSESNVDADLKVN.

It belongs to the bacterial ribosomal protein bS6 family.

In terms of biological role, binds together with bS18 to 16S ribosomal RNA. This is Small ribosomal subunit protein bS6 from Borrelia recurrentis (strain A1).